A 101-amino-acid polypeptide reads, in one-letter code: Citrate lyase acyl carrier protein (101 aa).

Position 14 is an O-(phosphoribosyl dephospho-coenzyme A)serine (S14).

It belongs to the CitD family. In terms of assembly, oligomer with a subunit composition of (alpha,beta,gamma)6.

Its subcellular location is the cytoplasm. In terms of biological role, covalent carrier of the coenzyme of citrate lyase. This is Citrate lyase acyl carrier protein from Streptococcus uberis (strain ATCC BAA-854 / 0140J).